We begin with the raw amino-acid sequence, 531 residues long: Cytochrome P450 monooxygenase ffsD (531 aa).

The helical transmembrane segment at Val40–Val60 threads the bilayer. Position 475 (Cys475) interacts with heme.

The protein belongs to the cytochrome P450 family. It depends on heme as a cofactor.

Its subcellular location is the membrane. It participates in mycotoxin biosynthesis. Functionally, cytochrome P450 monooxygenase; part of the gene cluster that mediates the biosynthesis of the cytotoxic leucine-containing cytochalasans, including aspochalasin C, aspochalasin E, TMC-169, flavichalasine F, aspergillin PZ, aspochalasin M and flavichalasine G. The first step in the pathway is catalyzed by the hybrid PKS-NRPS ffsA that utilizes 8 units of malonyl-CoA to iteratively assemble the octaketide chain before addition of L-leucine by the C-terminal NRPS modules. Because ffsA lacks a designated enoylreductase (ER) domain, the required activity is provided the enoyl reductase fssC. The methyltransferase (MT) domain of ffsA catalyzes the alpha-methylation at C10 and C14 using S-adenosyl-L-methionine as the methyl-donating cosubstrate. Reduction by the hydrolyase ffsE, followed by dehydration and intra-molecular Diels-Alder cyclization by the Diels-Alderase ffsF then yield the required isoindolone-fused macrocycle. A number of oxidative steps catalyzed by the tailoring cytochrome P450 monooxygenase ffsD, the FAD-linked oxidoreductase ffsJ and the short-chain dehydrogenase/reductase ffsI, are further required to afford the final products. This is Cytochrome P450 monooxygenase ffsD from Aspergillus flavipes.